Here is an 88-residue protein sequence, read N- to C-terminus: HssA/B-like protein 17 (88 aa).

Belongs to the hssA/B family.

The polypeptide is HssA/B-like protein 17 (hssl17) (Dictyostelium discoideum (Social amoeba)).